A 525-amino-acid polypeptide reads, in one-letter code: GMP synthase [glutamine-hydrolyzing] (525 aa).

Residues 8–207 (KILILDFGSQ…ALDICQCEAN (200 aa)) form the Glutamine amidotransferase type-1 domain. Residue C85 is the Nucleophile of the active site. Active-site residues include H181 and E183. The GMPS ATP-PPase domain maps to 208-400 (WKPSSIIEDA…LGLPYNMLYR (193 aa)). ATP is bound at residue 235–241 (SGGVDSS).

As to quaternary structure, homodimer.

It carries out the reaction XMP + L-glutamine + ATP + H2O = GMP + L-glutamate + AMP + diphosphate + 2 H(+). It participates in purine metabolism; GMP biosynthesis; GMP from XMP (L-Gln route): step 1/1. In terms of biological role, catalyzes the synthesis of GMP from XMP. This chain is GMP synthase [glutamine-hydrolyzing], found in Shewanella loihica (strain ATCC BAA-1088 / PV-4).